Here is a 309-residue protein sequence, read N- to C-terminus: Jacalin-related lectin 25 (309 aa).

The Jacalin-type lectin domain occupies 8–190; the sequence is MFKVGPIGSQ…LTSIGIYVCP (183 aa).

Belongs to the jacalin lectin family.

This chain is Jacalin-related lectin 25 (JAL25), found in Arabidopsis thaliana (Mouse-ear cress).